A 239-amino-acid chain; its full sequence is Myogenic factor 6 (239 aa).

The segment at 28–59 (PGVSPLYEGNDSPLSPGQDPVPSETGCESSGE) is disordered. A bHLH domain is found at 92-143 (DRRKAATLRERRRLKKINEAFDALKKKTVPNPNQRLPKVEILRSAINYIEKL). Polar residues predominate over residues 182–196 (CQSWQENPDHSSSQM). The disordered stretch occupies residues 182 to 239 (CQSWQENPDHSSSQMAGHREGAVLESSESSSLRRLSSIVDSISTEEPKARCPSQISEK). Over residues 204–223 (VLESSESSSLRRLSSIVDSI) the composition is skewed to low complexity.

Efficient DNA binding requires dimerization with another bHLH protein.

The protein localises to the nucleus. Its function is as follows. Involved in muscle differentiation (myogenic factor). Induces fibroblasts to differentiate into myoblasts. Probable sequence specific DNA-binding protein. The sequence is that of Myogenic factor 6 (myf6) from Danio rerio (Zebrafish).